The primary structure comprises 394 residues: 8-amino-7-oxononanoate synthase (394 aa).

Residue R21 coordinates substrate. Residue 112–113 (GY) participates in pyridoxal 5'-phosphate binding. A substrate-binding site is contributed by H137. Pyridoxal 5'-phosphate contacts are provided by S183, H211, and T239. The residue at position 242 (K242) is an N6-(pyridoxal phosphate)lysine. T358 serves as a coordination point for substrate.

The protein belongs to the class-II pyridoxal-phosphate-dependent aminotransferase family. BioF subfamily. In terms of assembly, homodimer. It depends on pyridoxal 5'-phosphate as a cofactor.

It carries out the reaction 6-carboxyhexanoyl-[ACP] + L-alanine + H(+) = (8S)-8-amino-7-oxononanoate + holo-[ACP] + CO2. It functions in the pathway cofactor biosynthesis; biotin biosynthesis. Catalyzes the decarboxylative condensation of pimeloyl-[acyl-carrier protein] and L-alanine to produce 8-amino-7-oxononanoate (AON), [acyl-carrier protein], and carbon dioxide. The protein is 8-amino-7-oxononanoate synthase of Burkholderia pseudomallei (strain K96243).